We begin with the raw amino-acid sequence, 179 residues long: Probable mitochondrial import inner membrane translocase subunit Tim17 1 (179 aa).

3 helical membrane passes run 17-37 (CGGAFAMGALGGGAFQAIKGF), 61-81 (LVGGNFAVWGATFSAIDCSLV), and 113-133 (LSSALVGGALLALIEGVGIVV).

The protein belongs to the Tim17/Tim22/Tim23 family. Component of the TIM23 complex at least composed of Tim23, Tim17 (Tim17a1, Tim17a2 or Tim17b1) and a Tim50. The complex interacts with the Tim44 component of the PAM complex.

It is found in the mitochondrion inner membrane. Essential component of the TIM23 complex, a complex that mediates the translocation of transit peptide-containing proteins across the mitochondrial inner membrane. In Drosophila melanogaster (Fruit fly), this protein is Probable mitochondrial import inner membrane translocase subunit Tim17 1 (Tim17b1).